Consider the following 290-residue polypeptide: Elongation factor Ts (290 aa).

Residues 87–90 (TDFV) are involved in Mg(2+) ion dislocation from EF-Tu.

The protein belongs to the EF-Ts family.

Its subcellular location is the cytoplasm. Its function is as follows. Associates with the EF-Tu.GDP complex and induces the exchange of GDP to GTP. It remains bound to the aminoacyl-tRNA.EF-Tu.GTP complex up to the GTP hydrolysis stage on the ribosome. In Treponema pallidum (strain Nichols), this protein is Elongation factor Ts (tsf).